The following is a 556-amino-acid chain: Testis-specific protein 10-interacting protein (556 aa).

Residues 1–20 (MGQETNMLNAHQQLVRTSSG) are compositionally biased toward polar residues. Disordered regions lie at residues 1–102 (MGQE…SPRK) and 180–320 (CTSI…GPWD). Basic residues predominate over residues 75–85 (KDRRLRGRNKK). Acidic residues-rich tracts occupy residues 213–225 (EPEE…LGAE) and 246–260 (LEEE…EAED). Positions 266–278 (PWRRRTSSRRKGR) are enriched in basic residues. The span at 304–320 (EPQRRKPRAKELEGPWD) shows a compositional bias: basic and acidic residues. Positions 387–463 (LRAWELQQRE…ELQGIQHRVQ (77 aa)) form a coiled coil. The tract at residues 503–556 (AGKRDMEGAPRRHRSHRSVGARMEPSSQSPPKMEPTGSQADQHFAPNPDQELSP) is disordered. Polar residues predominate over residues 527 to 543 (PSSQSPPKMEPTGSQAD).

In Bos taurus (Bovine), this protein is Testis-specific protein 10-interacting protein (TSGA10IP).